The chain runs to 505 residues: MGLDKDGISNIAKERIASSLVEDTKDLAAELCKHFYNQGWVSGTGGSITLKVLESDVDVQERLIVMAPSGVQKERMLPVDMYVLSSDGTVLSAPPAKGAPHKPPKCSECCPLFLKAYKMRNAGAVIHSHGLESCLATMINPTAKEFRITHMEMIKGIAGHGYYDELVVPIIENSAREYELTDALAAAMEAYPKATAVLVRNHGIYIWGDSWISAKTQAECYHYLFNAALKLHQLGLDPADAKHGPLTRPQTLPDFANKRATSKNVFVLDIEGTTTPISFVTEVLFPYARENVSSFFKSTYNSPETLNDIRLLRDQVHEDLRNNVPGATEIPVESAGIDAVVAAIEKNVQAMIKADRKVTALKELQGHIWRIGYENGELKGSVFEDVPEALAKWDARGIKTYIYSSGSREAQKLIFGNTNFGDLRVYLSGFFDTTIGHKREARSYKEIFLTLGVDHPSCITFATDVLAEAVAAKEAGLQAVLLLRPGNAPLPSDHGFRTAKSLLEL.

The interval 1-237 is methylthioribulose-1-phosphate dehydratase; the sequence is MGLDKDGISN…ALKLHQLGLD (237 aa). Residue C109 coordinates substrate. Zn(2+) contacts are provided by H127 and H129. The active-site Proton donor/acceptor; for methylthioribulose-1-phosphate dehydratase activity is E152. H202 contributes to the Zn(2+) binding site. Residues 266–505 are enolase-phosphatase E1; that stretch reads FVLDIEGTTT…FRTAKSLLEL (240 aa). Residues D269 and E271 each contribute to the Mg(2+) site. Substrate-binding positions include 404 to 405 and K438; that span reads SS. A Mg(2+)-binding site is contributed by D464.

The protein in the N-terminal section; belongs to the aldolase class II family. MtnB subfamily. It in the C-terminal section; belongs to the HAD-like hydrolase superfamily. MasA/MtnC family. The cofactor is Zn(2+). Requires Mg(2+) as cofactor.

It carries out the reaction 5-(methylsulfanyl)-D-ribulose 1-phosphate = 5-methylsulfanyl-2,3-dioxopentyl phosphate + H2O. The enzyme catalyses 5-methylsulfanyl-2,3-dioxopentyl phosphate + H2O = 1,2-dihydroxy-5-(methylsulfanyl)pent-1-en-3-one + phosphate. It participates in amino-acid biosynthesis; L-methionine biosynthesis via salvage pathway; L-methionine from S-methyl-5-thio-alpha-D-ribose 1-phosphate: step 2/6. It functions in the pathway amino-acid biosynthesis; L-methionine biosynthesis via salvage pathway; L-methionine from S-methyl-5-thio-alpha-D-ribose 1-phosphate: step 3/6. Its pathway is amino-acid biosynthesis; L-methionine biosynthesis via salvage pathway; L-methionine from S-methyl-5-thio-alpha-D-ribose 1-phosphate: step 4/6. This is Probable bifunctional methylthioribulose-1-phosphate dehydratase/enolase-phosphatase E1 from Physcomitrium patens (Spreading-leaved earth moss).